Here is a 295-residue protein sequence, read N- to C-terminus: Glutenin, low molecular weight subunit PTDUCD1 (295 aa).

Residues 1–20 form the signal peptide; that stretch reads MKTFLVFALLAVVATSTIAQ. Residues 30 to 61 are disordered; the sequence is ERPWQEQPLPPQHTLFPQQQPFPQQQQPPFSQ. A compositionally biased stretch (low complexity) spans 41-61; the sequence is QHTLFPQQQPFPQQQQPPFSQ.

The protein belongs to the gliadin/glutenin family. As to quaternary structure, disulfide-bridge linked aggregates.

Glutenins are high-molecular weight seed storage proteins of wheat endosperm. Thought to be responsible for the visco-elastic property of wheat dough. This is Glutenin, low molecular weight subunit PTDUCD1 from Triticum aestivum (Wheat).